Here is a 761-residue protein sequence, read N- to C-terminus: Dipeptidyl-peptidase 4 (761 aa).

The N-terminal stretch at 1–15 (MTLSAWIILVTLAMA) is a signal peptide. Active-site charge relay system residues include Ser-622, Asp-706, and His-738.

Belongs to the peptidase S9C family.

It is found in the membrane. Its function is as follows. May be involved in metabolism of dipeptides or may affect host defense mechanisms. The protein is Dipeptidyl-peptidase 4 (DPP) of Giardia intestinalis (Giardia lamblia).